The sequence spans 315 residues: Ribose-phosphate pyrophosphokinase (315 aa).

Residues 37–39 (DGE) and 96–97 (RQ) each bind ATP. Mg(2+) contacts are provided by His131 and Asp171. Residue Lys195 is part of the active site. Residues Arg197, Asp221, and 225 to 229 (DTGGT) contribute to the D-ribose 5-phosphate site.

It belongs to the ribose-phosphate pyrophosphokinase family. Class I subfamily. Homohexamer. Requires Mg(2+) as cofactor.

The protein localises to the cytoplasm. The catalysed reaction is D-ribose 5-phosphate + ATP = 5-phospho-alpha-D-ribose 1-diphosphate + AMP + H(+). The protein operates within metabolic intermediate biosynthesis; 5-phospho-alpha-D-ribose 1-diphosphate biosynthesis; 5-phospho-alpha-D-ribose 1-diphosphate from D-ribose 5-phosphate (route I): step 1/1. Involved in the biosynthesis of the central metabolite phospho-alpha-D-ribosyl-1-pyrophosphate (PRPP) via the transfer of pyrophosphoryl group from ATP to 1-hydroxyl of ribose-5-phosphate (Rib-5-P). The polypeptide is Ribose-phosphate pyrophosphokinase (Pasteurella multocida (strain Pm70)).